The following is a 683-amino-acid chain: E3 ubiquitin-protein ligase WAVH1 (683 aa).

Residues cysteine 130–cysteine 176 form an RING-type; atypical zinc finger. Residues aspartate 302–isoleucine 438 enclose the VWFA domain.

Expressed in root tips and leaf primordia.

The enzyme catalyses S-ubiquitinyl-[E2 ubiquitin-conjugating enzyme]-L-cysteine + [acceptor protein]-L-lysine = [E2 ubiquitin-conjugating enzyme]-L-cysteine + N(6)-ubiquitinyl-[acceptor protein]-L-lysine.. Its function is as follows. E3 ubiquitin-protein ligase involved in the regulation of root growth. Acts as a positive regulator of root gravitropism. Possesses E3 protein ligase activity in vitro. The chain is E3 ubiquitin-protein ligase WAVH1 from Arabidopsis thaliana (Mouse-ear cress).